Here is a 627-residue protein sequence, read N- to C-terminus: UvrABC system protein C (627 aa).

Residues 26–105 form the GIY-YIG domain; that stretch reads PEPGVYFMRD…IKQHQPYFNV (80 aa). The region spanning 215–250 is the UVR domain; that stretch reads QELIDILSEQMEKAAEALNFEVAARIRDQIAGLKSL.

Belongs to the UvrC family. Interacts with UvrB in an incision complex.

It is found in the cytoplasm. In terms of biological role, the UvrABC repair system catalyzes the recognition and processing of DNA lesions. UvrC both incises the 5' and 3' sides of the lesion. The N-terminal half is responsible for the 3' incision and the C-terminal half is responsible for the 5' incision. The protein is UvrABC system protein C of Trichormus variabilis (strain ATCC 29413 / PCC 7937) (Anabaena variabilis).